A 1693-amino-acid chain; its full sequence is Serine protease filzig (1693 aa).

Residues 1 to 47 (MFKWVTPASTATLSRCTLPATTAATTTTTAMAATRTATTTTRTTRPQ) are Cytoplasmic-facing. A helical; Signal-anchor for type II membrane protein membrane pass occupies residues 48–68 (LLSIALTSLIIIVASFVPTTS). Residues 69-1693 (GFRSIETNGG…PWLRSITGVK (1625 aa)) lie on the Extracellular side of the membrane. Disordered stretches follow at residues 170–198 (QQSA…QQPS), 212–321 (QQLD…NDDF), 352–465 (GLQD…THPG), and 477–524 (STGY…TTVS). 2 stretches are compositionally biased toward polar residues: residues 178-198 (FESY…QQPS) and 212-222 (QQLDSSSSISP). Low complexity-rich tracts occupy residues 230-241 (EPQQQEYQSESE) and 252-268 (TSSS…SSAS). A compositionally biased stretch (polar residues) spans 274-294 (EPSQPADASNDQTTQKINKQP). Low complexity-rich tracts occupy residues 358 to 404 (SSES…PTQK), 422 to 431 (QQKPQQVAKP), and 488 to 501 (EPPK…PAEQ). Residues 502–524 (SYISSSTSAKRPTTGHNSPTTVS) show a composition bias toward polar residues. 2 N-linked (GlcNAc...) asparagine glycosylation sites follow: asparagine 541 and asparagine 582. Disordered stretches follow at residues 615–635 (QDAS…PGYG), 752–1007 (HYNP…PPAT), and 1057–1090 (YAHR…TVLI). Positions 771-799 (SVSSHTTKVQEQMDETSNGYQQSETTSGY) are enriched in polar residues. Residues 836-847 (PRPKPSTKRPAV) are compositionally biased toward basic residues. Composition is skewed to polar residues over residues 951–962 (QYDQPSAPSASY) and 989–1000 (KPISTSYVTGPS). Asparagine 1215 and asparagine 1272 each carry an N-linked (GlcNAc...) asparagine glycan. Low complexity-rich tracts occupy residues 1297–1307 (PVRTATTTRPK), 1331–1353 (TTTR…TTRR), and 1362–1376 (RVSS…SSAR). Residues 1297 to 1435 (PVRTATTTRP…TPNLAFHSPS (139 aa)) form a disordered region. Residues 1380–1391 (DEIVDEEDEEDV) are compositionally biased toward acidic residues. The Peptidase S1 domain occupies 1449 to 1691 (IVGGKGSTFG…YKPWLRSITG (243 aa)). A disulfide bond links cysteine 1480 and cysteine 1496. Catalysis depends on charge relay system residues histidine 1495 and aspartate 1544. 2 disulfides stabilise this stretch: cysteine 1608–cysteine 1627 and cysteine 1638–cysteine 1667. The active-site Charge relay system is the serine 1642.

Belongs to the peptidase S1 family.

The protein localises to the cell membrane. In terms of biological role, probable endopeptidase. In tracheal terminal cells, acts downstream of ich to regulate seamless tube growth and/or maintenance probably by processing lumenal matrix proteins. The polypeptide is Serine protease filzig (Drosophila melanogaster (Fruit fly)).